The sequence spans 82 residues: MAADRAQNLQDTFLNHVRKTKTPLTIFLVNGVKLQGIVTWFDNFCLLLRRDGHSQLVYKHAISTIMPGAPIQLFESGEDSPA.

The Sm domain maps to 11-71 (DTFLNHVRKT…ISTIMPGAPI (61 aa)).

It belongs to the Hfq family. In terms of assembly, homohexamer.

Functionally, RNA chaperone that binds small regulatory RNA (sRNAs) and mRNAs to facilitate mRNA translational regulation in response to envelope stress, environmental stress and changes in metabolite concentrations. Also binds with high specificity to tRNAs. This chain is RNA-binding protein Hfq, found in Rhodopseudomonas palustris (strain TIE-1).